The chain runs to 559 residues: Intestinal-type alkaline phosphatase (559 aa).

The signal sequence occupies residues 1-19 (MQGPWVLLLLGLRLQLSLS). D61 lines the Mg(2+) pocket. 2 residues coordinate Zn(2+): D61 and S111. The Phosphoserine intermediate role is filled by S111. C140 and C202 form a disulfide bridge. The N-linked (GlcNAc...) asparagine glycan is linked to N141. S174 is a Mg(2+) binding site. Residue E235 coordinates Ca(2+). N241 carries N-linked (GlcNAc...) asparagine glycosylation. Positions 288, 289, and 304 each coordinate Ca(2+). Position 330 (E330) interacts with Mg(2+). D335, H339, D376, and H377 together coordinate Zn(2+). An N-linked (GlcNAc...) asparagine glycan is attached at N426. A Zn(2+)-binding site is contributed by H450. C485 and C492 are disulfide-bonded. The disordered stretch occupies residues 496-531 (PPADESQTTTTTRQTTITTTTTTTTTTTTPVHNSAR). Low complexity predominate over residues 503–524 (TTTTTRQTTITTTTTTTTTTTT). Residue N528 is the site of GPI-anchor amidated asparagine attachment. Positions 529-559 (SARSLGPATAPLALALLAGMLMLLLGAPAES) are cleaved as a propeptide — removed in mature form.

This sequence belongs to the alkaline phosphatase family. In terms of assembly, homodimer. Mg(2+) is required as a cofactor. The cofactor is Zn(2+). It depends on Ca(2+) as a cofactor. As to expression, intestine and thymus.

Its subcellular location is the cell membrane. The catalysed reaction is a phosphate monoester + H2O = an alcohol + phosphate. Functionally, alkaline phosphatase that can hydrolyze various phosphate compounds. The protein is Intestinal-type alkaline phosphatase (Iap) of Mus musculus (Mouse).